The following is a 110-amino-acid chain: UPF0122 protein SERP0802 (110 aa).

The protein belongs to the UPF0122 family.

Functionally, might take part in the signal recognition particle (SRP) pathway. This is inferred from the conservation of its genetic proximity to ftsY/ffh. May be a regulatory protein. This Staphylococcus epidermidis (strain ATCC 35984 / DSM 28319 / BCRC 17069 / CCUG 31568 / BM 3577 / RP62A) protein is UPF0122 protein SERP0802.